The following is a 371-amino-acid chain: Glycosyltransferase 8 domain-containing protein 1 (371 aa).

Residues 1–7 lie on the Cytoplasmic side of the membrane; that stretch reads MSFRKVH. Residues 8–28 form a helical; Signal-anchor for type II membrane protein membrane-spanning segment; that stretch reads IAIILLAAVVFLLILHHNILG. Residues 29–371 are Lumenal-facing; the sequence is LTDILTRQSS…RRHGEADGTK (343 aa). N104, N249, and N257 each carry an N-linked (GlcNAc...) asparagine glycan.

Belongs to the glycosyltransferase 8 family.

The protein resides in the membrane. The sequence is that of Glycosyltransferase 8 domain-containing protein 1 (glt8d1) from Xenopus tropicalis (Western clawed frog).